A 155-amino-acid chain; its full sequence is Fibroblast growth factor 1 (155 aa).

A propeptide spanning residues 1–15 (MAEGDITTFNAITES) is cleaved from the precursor. N33 contacts heparin. Residues 127 to 143 (KKNGASKKGSRTHYGQK) form a heparin-binding region.

Belongs to the heparin-binding growth factors family.

The protein localises to the secreted. Its subcellular location is the cytoplasm. It is found in the cell cortex. It localises to the cytosol. The protein resides in the nucleus. Its function is as follows. Plays an important role in the regulation of cell survival, cell division, angiogenesis, cell differentiation and cell migration. Functions as a potent mitogen in vitro. Acts as a ligand for FGFR1 and integrins. Binds to FGFR1 in the presence of heparin leading to FGFR1 dimerization and activation via sequential autophosphorylation on tyrosine residues which act as docking sites for interacting proteins, leading to the activation of several signaling cascades. Binds to integrins. Its binding to integrins and subsequent ternary complex formation with integrins and FGFR1 are essential for FGF1 signaling. This is Fibroblast growth factor 1 (fgf1) from Xenopus laevis (African clawed frog).